A 425-amino-acid polypeptide reads, in one-letter code: Probable G-protein coupled receptor 63 (425 aa).

Residues 1-87 (MVVSGVLTAP…VFKSLNLAVQ (87 aa)) lie on the Extracellular side of the membrane. 3 N-linked (GlcNAc...) asparagine glycosylation sites follow: asparagine 22, asparagine 34, and asparagine 68. The chain crosses the membrane as a helical span at residues 88 to 112 (IILSAIMIFILFVSFLGNLVVCLMV). At 113–123 (YQKAAMRSAIN) the chain is on the cytoplasmic side. A helical transmembrane segment spans residues 124–148 (ILLASLAFADMLLAVLNMPFALVTI). Over 149 to 165 (LTTRWIFGKFFCRLSAM) the chain is Extracellular. Residues 166 to 190 (FFWLFVIEGVAILLIISIDRFLIIV) form a helical membrane-spanning segment. The Cytoplasmic segment spans residues 191–202 (QRQDKLNPYRAK). Residues 203-222 (VLIAVSWATAFSVAFPLAVG) form a helical membrane-spanning segment. Over 223–247 (NPDLQIPSRAPQCVFGYTTNSGYQA) the chain is Extracellular. Residues 248 to 272 (YVILISLISFFIPFLVILYSFMGIL) traverse the membrane as a helical segment. Over 273–321 (NTLRHNALRIHSYPEGICLSQASKLGLMSLQRPFQMSIDMGFKTRAFTT) the chain is Cytoplasmic. A helical membrane pass occupies residues 322 to 345 (ILILFAVFIVCWAPFTTYSLVATF). Over 346–357 (SKHFYYQHNFFE) the chain is Extracellular. A helical membrane pass occupies residues 358–379 (ISTWLLWLCYLKSALNPLIYYW). The Cytoplasmic portion of the chain corresponds to 380 to 425 (RIKKFHDACLDMMPKSFKFLPRLPGHTRRRIRPSAVYVCGEHRTVL).

This sequence belongs to the G-protein coupled receptor 1 family. Brain specific.

It localises to the cell membrane. Orphan receptor. May play a role in brain function. The chain is Probable G-protein coupled receptor 63 (Gpr63) from Mus musculus (Mouse).